The chain runs to 110 residues: Nucleoid-associated protein NFA_2940 (110 aa).

The protein belongs to the YbaB/EbfC family. In terms of assembly, homodimer.

It is found in the cytoplasm. The protein resides in the nucleoid. Its function is as follows. Binds to DNA and alters its conformation. May be involved in regulation of gene expression, nucleoid organization and DNA protection. The protein is Nucleoid-associated protein NFA_2940 of Nocardia farcinica (strain IFM 10152).